Here is a 577-residue protein sequence, read N- to C-terminus: MARLSRERYAQLYGPTTGDRIRLADTNLLVEVTEDRCGGPGLAGDEAVFGGGKVLRESMGQGRASRADGAPDTVITGAVIIDYWGIIKADIGIRDGRIVGIGKAGNPDIMTGVHRDLVVGPSTEIISGNRRIVTAGTVDCHVHLICPQIIVEALAAGTTTIIGGGTGPAEGTKATTVTPGEWHLARMLESLDGWPVNFALLGKGNTVNPDALWEQLRGGASGFKLHEDWGSTPAAIDTCLAVADVAGVQVALHSDTLNETGFVEDTIGAIAGRSIHAYHTEGAGGGHAPDIITVAAQPNVLPSSTNPTRPHTVNTLDEHLDMLMVCHHLNPRIPEDLAFAESRIRPSTIAAEDVLHDMGAISMIGSDSQAMGRVGEVVLRTWQTAHVMKARRGALEGDPSGSQAADNNRVRRYIAKYTICPAIAHGMDHLIGSVEVGKLADLVLWEPAFFGVRPHVVLKGGAIAWAAMGDANASIPTPQPVLPRPMFGAAAATAAATSVHFVAPQSIDARLADRLAVNRGLAPVADVRAVGKTDLPLNDALPSIEVDPDTFTVRIDGQVWQPQPAAELPMTQRYFLF.

Residues 136–577 enclose the Urease domain; the sequence is GTVDCHVHLI…LPMTQRYFLF (442 aa). Ni(2+) contacts are provided by H141, H143, and K224. Position 224 is an N6-carboxylysine (K224). A substrate-binding site is contributed by H226. 2 residues coordinate Ni(2+): H253 and H279. The active-site Proton donor is the H327. D367 lines the Ni(2+) pocket.

It belongs to the metallo-dependent hydrolases superfamily. Urease alpha subunit family. In terms of assembly, heterotrimer of UreA (gamma), UreB (beta) and UreC (alpha) subunits. Three heterotrimers associate to form the active enzyme. The cofactor is Ni cation. In terms of processing, carboxylation allows a single lysine to coordinate two nickel ions.

Its subcellular location is the cytoplasm. It carries out the reaction urea + 2 H2O + H(+) = hydrogencarbonate + 2 NH4(+). The protein operates within nitrogen metabolism; urea degradation; CO(2) and NH(3) from urea (urease route): step 1/1. The sequence is that of Urease subunit alpha from Mycobacterium bovis (strain ATCC BAA-935 / AF2122/97).